We begin with the raw amino-acid sequence, 516 residues long: Nucleolar complex protein 4 homolog (516 aa).

Transmembrane regions (helical) follow at residues 296–316 (SACD…FILI), 347–367 (FFHL…LVAA), and 375–395 (LALT…CNLL).

This sequence belongs to the CBF/MAK21 family.

The protein resides in the nucleus membrane. It localises to the nucleus. The protein localises to the nucleolus. The sequence is that of Nucleolar complex protein 4 homolog (Noc4l) from Rattus norvegicus (Rat).